The sequence spans 188 residues: Elongation factor P-like protein (188 aa).

The protein belongs to the elongation factor P family.

The protein is Elongation factor P-like protein of Aliivibrio fischeri (strain MJ11) (Vibrio fischeri).